A 252-amino-acid polypeptide reads, in one-letter code: Ubiquinone/menaquinone biosynthesis C-methyltransferase UbiE (252 aa).

Residues Thr-71, Asp-100, 124–125 (DA), and Ser-141 contribute to the S-adenosyl-L-methionine site.

It belongs to the class I-like SAM-binding methyltransferase superfamily. MenG/UbiE family.

The enzyme catalyses a 2-demethylmenaquinol + S-adenosyl-L-methionine = a menaquinol + S-adenosyl-L-homocysteine + H(+). It catalyses the reaction a 2-methoxy-6-(all-trans-polyprenyl)benzene-1,4-diol + S-adenosyl-L-methionine = a 5-methoxy-2-methyl-3-(all-trans-polyprenyl)benzene-1,4-diol + S-adenosyl-L-homocysteine + H(+). It participates in quinol/quinone metabolism; menaquinone biosynthesis; menaquinol from 1,4-dihydroxy-2-naphthoate: step 2/2. It functions in the pathway cofactor biosynthesis; ubiquinone biosynthesis. Its function is as follows. Methyltransferase required for the conversion of demethylmenaquinol (DMKH2) to menaquinol (MKH2) and the conversion of 2-polyprenyl-6-methoxy-1,4-benzoquinol (DDMQH2) to 2-polyprenyl-3-methyl-6-methoxy-1,4-benzoquinol (DMQH2). This is Ubiquinone/menaquinone biosynthesis C-methyltransferase UbiE from Caulobacter sp. (strain K31).